A 182-amino-acid polypeptide reads, in one-letter code: Organic solute transporter subunit beta (182 aa).

A signal peptide spans 1-20 (MSGLLKYLFGCFILCLLLQG). Residues 21 to 64 (KTHMTSATISKPHETIDIEKQNMTGERNSTLAQQLSFPMEDPTN) are Extracellular-facing. Residues Asn-42 and Asn-48 are each glycosylated (N-linked (GlcNAc...) asparagine). Residues 65-85 (WNYAILALAFVVLFLAFLILA) form a helical membrane-spanning segment. Over 86 to 182 (QNSRANRTRK…LYTDSKEDDV (97 aa)) the chain is Cytoplasmic.

Belongs to the OST-beta family. Interacts with slc51a. The Ost-alpha/Ost-beta complex is a heterodimer composed of alpha (slc51a) and beta (slc51b) subunit; may induce the transport of slc51a from the endoplasmic reticulum to the plasma membrane. As to expression, expressed in liver.

The protein resides in the cell membrane. In terms of biological role, essential component of the Ost-alpha/Ost-beta complex, a heterodimer that acts as the intestinal basolateral transporter responsible for bile acid export from enterocytes into portal blood. Efficiently transports the major species of bile acids. May modulate slc51a glycosylation, membrane trafficking and stability activities. Able to transport taurocholate, estrone sulfate, digoxin, and prostaglandin E(2), but not p-aminohippurate or S-dinitrophenyl glutathione. The chain is Organic solute transporter subunit beta (slc51b) from Leucoraja erinaceus (Little skate).